The following is a 255-amino-acid chain: Putative ankyrin repeat protein R880 (255 aa).

5 ANK repeats span residues 79–109 (SGIN…DIHY), 110–139 (KTDY…NINT), 141–169 (DCYA…NVRK), 171–199 (RDLA…DVRS), and 201–229 (KNYA…NFRV).

The sequence is that of Putative ankyrin repeat protein R880 from Acanthamoeba polyphaga (Amoeba).